The primary structure comprises 158 residues: Ribosome maturation factor RimP (158 aa).

Belongs to the RimP family.

The protein localises to the cytoplasm. Required for maturation of 30S ribosomal subunits. The protein is Ribosome maturation factor RimP of Pseudomonas savastanoi pv. phaseolicola (strain 1448A / Race 6) (Pseudomonas syringae pv. phaseolicola (strain 1448A / Race 6)).